The following is a 419-amino-acid chain: Caspase-12 (419 aa).

Positions M1–E92 constitute a CARD domain. Phosphoserine is present on S85. A disordered region spans residues F88–E113. Catalysis depends on residues H250 and C298.

The protein belongs to the peptidase C14A family. As to quaternary structure, heterotetramer that consists of two anti-parallel arranged heterodimers, each one formed by two subunits (Potential). Interacts with TRAF2 under resting conditions; this interaction is reduced in ER stress conditions. In terms of tissue distribution, mainly expressed in skeletal muscle and lung.

In terms of biological role, involved in the activation cascade of caspases responsible for apoptosis execution. The chain is Caspase-12 (Casp12) from Mus musculus (Mouse).